The primary structure comprises 261 residues: MDWGTLHTFVGGVNKHSTSIGKVWVTVLFVFRVMILVVAAQEVWGDEQEDFVCNTLQPGCRNVCYDHFFPVSHIRLWALQLIFVSTPALLVAMHVAYYRHEAARRFRRGETRSEFKDLEDIKRQKVRIEGSLWWTYTSSIFFRIVFEAAFMYVFYFLYNGYHLPWVLKCGIQPCPNLVDCFISRPTEKTVFTIFMISASVICMLLNVAELCYLLLKVCFRRSKRAQTQKAPPNHALKESKQNEMNELISEGGQNAITGFPS.

At 1 to 22 the chain is on the cytoplasmic side; the sequence is MDWGTLHTFVGGVNKHSTSIGK. Residues 23-45 traverse the membrane as a helical segment; the sequence is VWVTVLFVFRVMILVVAAQEVWG. Residues 46-75 lie on the Extracellular side of the membrane; that stretch reads DEQEDFVCNTLQPGCRNVCYDHFFPVSHIR. The chain crosses the membrane as a helical span at residues 76-98; it reads LWALQLIFVSTPALLVAMHVAYY. Topologically, residues 99–131 are cytoplasmic; it reads RHEAARRFRRGETRSEFKDLEDIKRQKVRIEGS. Residues 132 to 154 form a helical membrane-spanning segment; sequence LWWTYTSSIFFRIVFEAAFMYVF. The Extracellular portion of the chain corresponds to 155-192; it reads YFLYNGYHLPWVLKCGIQPCPNLVDCFISRPTEKTVFT. The chain crosses the membrane as a helical span at residues 193–215; that stretch reads IFMISASVICMLLNVAELCYLLL. At 216 to 261 the chain is on the cytoplasmic side; the sequence is KVCFRRSKRAQTQKAPPNHALKESKQNEMNELISEGGQNAITGFPS.

This sequence belongs to the connexin family. Beta-type (group I) subfamily. In terms of assembly, a connexon is composed of a hexamer of connexins. Interacts with CNST.

The protein resides in the cell membrane. Its subcellular location is the cell junction. The protein localises to the gap junction. In terms of biological role, one gap junction consists of a cluster of closely packed pairs of transmembrane channels, the connexons, through which materials of low MW diffuse from one cell to a neighboring cell. This Bos taurus (Bovine) protein is Gap junction beta-6 protein (GJB6).